The chain runs to 256 residues: Imidazole glycerol phosphate synthase subunit HisF (256 aa).

Residues Asp-11 and Asp-130 contribute to the active site.

It belongs to the HisA/HisF family. As to quaternary structure, heterodimer of HisH and HisF.

It is found in the cytoplasm. It carries out the reaction 5-[(5-phospho-1-deoxy-D-ribulos-1-ylimino)methylamino]-1-(5-phospho-beta-D-ribosyl)imidazole-4-carboxamide + L-glutamine = D-erythro-1-(imidazol-4-yl)glycerol 3-phosphate + 5-amino-1-(5-phospho-beta-D-ribosyl)imidazole-4-carboxamide + L-glutamate + H(+). It participates in amino-acid biosynthesis; L-histidine biosynthesis; L-histidine from 5-phospho-alpha-D-ribose 1-diphosphate: step 5/9. IGPS catalyzes the conversion of PRFAR and glutamine to IGP, AICAR and glutamate. The HisF subunit catalyzes the cyclization activity that produces IGP and AICAR from PRFAR using the ammonia provided by the HisH subunit. The chain is Imidazole glycerol phosphate synthase subunit HisF from Prochlorococcus marinus (strain NATL1A).